The following is a 446-amino-acid chain: tRNA-2-methylthio-N(6)-dimethylallyladenosine synthase (446 aa).

The 117-residue stretch at 8-124 (KTYRVKSFGC…LPGMIDAAVA (117 aa)) folds into the MTTase N-terminal domain. Residues cysteine 17, cysteine 53, cysteine 87, cysteine 160, cysteine 164, and cysteine 167 each contribute to the [4Fe-4S] cluster site. One can recognise a Radical SAM core domain in the interval 146 to 378 (RKSAPSAFLT…QAALNRDQAA (233 aa)). Residues 381–442 (AGSVGRTCEV…PNSLAGQLLE (62 aa)) enclose the TRAM domain.

Belongs to the methylthiotransferase family. MiaB subfamily. As to quaternary structure, monomer. It depends on [4Fe-4S] cluster as a cofactor.

The protein resides in the cytoplasm. The catalysed reaction is N(6)-dimethylallyladenosine(37) in tRNA + (sulfur carrier)-SH + AH2 + 2 S-adenosyl-L-methionine = 2-methylsulfanyl-N(6)-dimethylallyladenosine(37) in tRNA + (sulfur carrier)-H + 5'-deoxyadenosine + L-methionine + A + S-adenosyl-L-homocysteine + 2 H(+). Functionally, catalyzes the methylthiolation of N6-(dimethylallyl)adenosine (i(6)A), leading to the formation of 2-methylthio-N6-(dimethylallyl)adenosine (ms(2)i(6)A) at position 37 in tRNAs that read codons beginning with uridine. The sequence is that of tRNA-2-methylthio-N(6)-dimethylallyladenosine synthase from Erythrobacter litoralis (strain HTCC2594).